The chain runs to 146 residues: Large ribosomal subunit protein uL15 (146 aa).

The segment at Met-1–Gly-54 is disordered. Gly residues predominate over residues Arg-23–Ile-37.

Belongs to the universal ribosomal protein uL15 family. Part of the 50S ribosomal subunit.

Its function is as follows. Binds to the 23S rRNA. This Acinetobacter baumannii (strain SDF) protein is Large ribosomal subunit protein uL15.